The primary structure comprises 521 residues: Medium/long-chain-fatty-acid--[acyl-carrier-protein] ligase MbtM (521 aa).

Belongs to the ATP-dependent AMP-binding enzyme family.

The enzyme catalyses a long-chain fatty acid + holo-[ACP] + ATP = a long-chain fatty acyl-[ACP] + AMP + diphosphate. It carries out the reaction a medium-chain fatty acid + holo-[ACP] + ATP = a medium-chain fatty acyl-[ACP] + AMP + diphosphate. The protein operates within siderophore biosynthesis; mycobactin biosynthesis. Its function is as follows. Activates lipidic moieties required for mycobactin biosynthesis. Converts medium- to long-chain aliphatic fatty acids into acyl adenylate, which is further transferred on to the phosphopantetheine arm of the carrier protein MbtL. This Mycobacterium tuberculosis (strain CDC 1551 / Oshkosh) protein is Medium/long-chain-fatty-acid--[acyl-carrier-protein] ligase MbtM (mbtM).